Reading from the N-terminus, the 105-residue chain is Met repressor (105 aa).

This sequence belongs to the MetJ family. In terms of assembly, homodimer.

It localises to the cytoplasm. Functionally, this regulatory protein, when combined with SAM (S-adenosylmethionine) represses the expression of the methionine regulon and of enzymes involved in SAM synthesis. The chain is Met repressor from Actinobacillus succinogenes (strain ATCC 55618 / DSM 22257 / CCUG 43843 / 130Z).